Consider the following 563-residue polypeptide: MRYIKSMTQQKLSFLLALYIGLFMNCAVFYRRFGSYAQEFTIWKGLSAVVELGATVLVTFFLLRLLSLFGRRVWRVLATLVVLFSAGASYYMTFLNVVIGYGIIASVMTTDIDLSKEVVGLHFVLWLIAVSVLPLIFIWSNHCRYTLLRQLRTPGQRFRSAAVVVLAGVMVWAPIRLLDIQQKKVERATGIDLPSYGGVVANSYLPSNWLSALGLYAWAQVDESSDNNSLINPARKFTYVAPKDGDDTYVVFIIGETTRWDHMGIFGYERNTTPKLAQEKNLAAFRGYSCDTATKLSLRCMFVREGGADNNPQRTLKEQNVFAVLKQLGFSSDLYAMQSEMWFYSNTMADNISYREQIGAEPRNRGKTVDDMLLIDEMQNSLAQNPEGKHLIILHTKGSHFNYTQRYPRSYAQWKPECIGVDSGCTKAQMINSYDNSVTYVDHFITSVFDQLRDKKAIVFYAADHGESINEREHLHGTPRNMAPPEQFRVPMLVWMSDKYLASPQHAQMFAHLKQQAEIKVPRRHVELYDTIMGCLGYTSPNGGINQNNNWCHIPDVQKVAAK.

The Cytoplasmic segment spans residues 1-9 (MRYIKSMTQ). A helical membrane pass occupies residues 10–30 (QKLSFLLALYIGLFMNCAVFY). Residues 31–48 (RRFGSYAQEFTIWKGLSA) are Periplasmic-facing. Residues 49 to 69 (VVELGATVLVTFFLLRLLSLF) traverse the membrane as a helical segment. Topologically, residues 70–79 (GRRVWRVLAT) are cytoplasmic. A helical transmembrane segment spans residues 80–100 (LVVLFSAGASYYMTFLNVVIG). Over 101–117 (YGIIASVMTTDIDLSKE) the chain is Periplasmic. A helical membrane pass occupies residues 118 to 138 (VVGLHFVLWLIAVSVLPLIFI). The Cytoplasmic segment spans residues 139–159 (WSNHCRYTLLRQLRTPGQRFR). A helical transmembrane segment spans residues 160–180 (SAAVVVLAGVMVWAPIRLLDI). Residues 181-563 (QQKKVERATG…IPDVQKVAAK (383 aa)) are Periplasmic-facing.

This sequence belongs to the phosphoethanolamine transferase family. EptB subfamily. Ca(2+) serves as cofactor.

It is found in the cell inner membrane. It catalyses the reaction alpha-Kdo-(2-&gt;4)-alpha-Kdo-(2-&gt;6)-lipid A (E. coli) + a 1,2-diacyl-sn-glycero-3-phosphoethanolamine = 7-O-[2-aminoethoxy(hydroxy)phosphoryl]-alpha-Kdo-(2-&gt;4)-alpha-Kdo-(2-&gt;6)-lipid A + a 1,2-diacyl-sn-glycerol. The catalysed reaction is alpha-Kdo-(2-&gt;4)-alpha-Kdo-(2-&gt;6)-lipid IVA (E. coli) + a 1,2-diacyl-sn-glycero-3-phosphoethanolamine = 7-O-[2-aminoethoxy(hydroxy)phosphoryl]-alpha-Kdo-(2-&gt;4)-alpha-Kdo-(2-&gt;6)-lipid IVA (E. coli) + a 1,2-diacyl-sn-glycerol. Its function is as follows. Catalyzes the addition of a phosphoethanolamine (pEtN) moiety to the outer 3-deoxy-D-manno-octulosonic acid (Kdo) residue of a Kdo(2)-lipid A. Phosphatidylethanolamines with one unsaturated acyl group function as pEtN donors and the reaction releases diacylglycerol. In Salmonella typhimurium (strain LT2 / SGSC1412 / ATCC 700720), this protein is Kdo(2)-lipid A phosphoethanolamine 7''-transferase (eptB).